The primary structure comprises 359 residues: UDP-N-acetylglucosamine--N-acetylmuramyl-(pentapeptide) pyrophosphoryl-undecaprenol N-acetylglucosamine transferase (359 aa).

Residues 15 to 17, asparagine 127, arginine 164, serine 192, isoleucine 246, 265 to 270, and glutamine 290 contribute to the UDP-N-acetyl-alpha-D-glucosamine site; these read SGG and ALTVSE.

This sequence belongs to the glycosyltransferase 28 family. MurG subfamily.

The protein localises to the cell membrane. It carries out the reaction di-trans,octa-cis-undecaprenyl diphospho-N-acetyl-alpha-D-muramoyl-L-alanyl-D-glutamyl-meso-2,6-diaminopimeloyl-D-alanyl-D-alanine + UDP-N-acetyl-alpha-D-glucosamine = di-trans,octa-cis-undecaprenyl diphospho-[N-acetyl-alpha-D-glucosaminyl-(1-&gt;4)]-N-acetyl-alpha-D-muramoyl-L-alanyl-D-glutamyl-meso-2,6-diaminopimeloyl-D-alanyl-D-alanine + UDP + H(+). The protein operates within cell wall biogenesis; peptidoglycan biosynthesis. Functionally, cell wall formation. Catalyzes the transfer of a GlcNAc subunit on undecaprenyl-pyrophosphoryl-MurNAc-pentapeptide (lipid intermediate I) to form undecaprenyl-pyrophosphoryl-MurNAc-(pentapeptide)GlcNAc (lipid intermediate II). This chain is UDP-N-acetylglucosamine--N-acetylmuramyl-(pentapeptide) pyrophosphoryl-undecaprenol N-acetylglucosamine transferase, found in Wigglesworthia glossinidia brevipalpis.